The following is a 91-amino-acid chain: Large ribosomal subunit protein bL31B-1 (91 aa).

This sequence belongs to the bacterial ribosomal protein bL31 family. Type B subfamily. As to quaternary structure, part of the 50S ribosomal subunit.

The protein is Large ribosomal subunit protein bL31B-1 of Streptomyces avermitilis (strain ATCC 31267 / DSM 46492 / JCM 5070 / NBRC 14893 / NCIMB 12804 / NRRL 8165 / MA-4680).